A 450-amino-acid polypeptide reads, in one-letter code: Glucose-6-phosphate isomerase (450 aa).

The active-site Proton donor is E290. Active-site residues include H311 and K425.

It belongs to the GPI family.

It localises to the cytoplasm. The catalysed reaction is alpha-D-glucose 6-phosphate = beta-D-fructose 6-phosphate. It participates in carbohydrate biosynthesis; gluconeogenesis. The protein operates within carbohydrate degradation; glycolysis; D-glyceraldehyde 3-phosphate and glycerone phosphate from D-glucose: step 2/4. In terms of biological role, catalyzes the reversible isomerization of glucose-6-phosphate to fructose-6-phosphate. In Limosilactobacillus fermentum (Lactobacillus fermentum), this protein is Glucose-6-phosphate isomerase.